The sequence spans 345 residues: Uroporphyrinogen decarboxylase (345 aa).

Residues 27–31, F46, D76, Y152, S207, and H321 each bind substrate; that span reads RQAGR.

It belongs to the uroporphyrinogen decarboxylase family. In terms of assembly, homodimer.

It is found in the cytoplasm. It carries out the reaction uroporphyrinogen III + 4 H(+) = coproporphyrinogen III + 4 CO2. The protein operates within porphyrin-containing compound metabolism; protoporphyrin-IX biosynthesis; coproporphyrinogen-III from 5-aminolevulinate: step 4/4. In terms of biological role, catalyzes the decarboxylation of four acetate groups of uroporphyrinogen-III to yield coproporphyrinogen-III. This Staphylococcus aureus (strain Mu3 / ATCC 700698) protein is Uroporphyrinogen decarboxylase.